The chain runs to 328 residues: Malate dehydrogenase (328 aa).

12–18 (GAAGQIG) contacts NAD(+). The substrate site is built by Arg-93 and Arg-99. NAD(+)-binding positions include Asn-106, Gln-113, and 130 to 132 (TGN). Positions 132 and 163 each coordinate substrate. The active-site Proton acceptor is His-188.

It belongs to the LDH/MDH superfamily. MDH type 2 family.

It catalyses the reaction (S)-malate + NAD(+) = oxaloacetate + NADH + H(+). Its function is as follows. Catalyzes the reversible oxidation of malate to oxaloacetate. The protein is Malate dehydrogenase of Kocuria rhizophila (strain ATCC 9341 / DSM 348 / NBRC 103217 / DC2201).